The sequence spans 357 residues: Eukaryotic translation initiation factor 3 subunit F (357 aa).

Positions 1–82 are disordered; that stretch reads MATPAVPVSA…PAPALPGPAL (82 aa). Ala2 carries the N-acetylalanine modification. The segment covering 9 to 36 has biased composition (pro residues); it reads SAPPATPTPVPAAAPASVPAPTPAPAAA. Over residues 37 to 74 the composition is skewed to low complexity; that stretch reads PVPAAAPASSSDPAAAAAATAAPGQTPASAQAPAQTPA. A Phosphoserine; by CDK11; in vitro modification is found at Ser46. The MPN domain maps to 92 to 222; the sequence is VRLHPVILAS…IKAYVSTLMG (131 aa). Lys238 carries the post-translational modification N6-acetyllysine. The residue at position 258 (Ser258) is a Phosphoserine.

This sequence belongs to the eIF-3 subunit F family. In terms of assembly, component of the eukaryotic translation initiation factor 3 (eIF-3) complex, which is composed of 13 subunits: EIF3A, EIF3B, EIF3C, EIF3D, EIF3E, EIF3F, EIF3G, EIF3H, EIF3I, EIF3J, EIF3K, EIF3L and EIF3M. The eIF-3 complex appears to include 3 stable modules: module A is composed of EIF3A, EIF3B, EIF3G and EIF3I; module B is composed of EIF3F, EIF3H, and EIF3M; and module C is composed of EIF3C, EIF3D, EIF3E, EIF3K and EIF3L. EIF3C of module C binds EIF3B of module A and EIF3H of module B, thereby linking the three modules. EIF3J is a labile subunit that binds to the eIF-3 complex via EIF3B. The eIF-3 complex interacts with RPS6KB1 under conditions of nutrient depletion. Mitogenic stimulation leads to binding and activation of a complex composed of MTOR and RPTOR, leading to phosphorylation and release of RPS6KB1 and binding of EIF4B to eIF-3. Interacts with RNF139; the interaction leads to protein translation inhibitions in a ubiquitination-dependent manner. Interacts with DTX1, the interaction is required for deubiquitinating activity towards NOTCH1. Post-translationally, phosphorylation is enhanced upon serum stimulation. Phosphorylated during apoptosis by caspase-processed CDK11.

It localises to the cytoplasm. It carries out the reaction Thiol-dependent hydrolysis of ester, thioester, amide, peptide and isopeptide bonds formed by the C-terminal Gly of ubiquitin (a 76-residue protein attached to proteins as an intracellular targeting signal).. Functionally, component of the eukaryotic translation initiation factor 3 (eIF-3) complex, which is required for several steps in the initiation of protein synthesis. The eIF-3 complex associates with the 40S ribosome and facilitates the recruitment of eIF-1, eIF-1A, eIF-2:GTP:methionyl-tRNAi and eIF-5 to form the 43S pre-initiation complex (43S PIC). The eIF-3 complex stimulates mRNA recruitment to the 43S PIC and scanning of the mRNA for AUG recognition. The eIF-3 complex is also required for disassembly and recycling of post-termination ribosomal complexes and subsequently prevents premature joining of the 40S and 60S ribosomal subunits prior to initiation. The eIF-3 complex specifically targets and initiates translation of a subset of mRNAs involved in cell proliferation, including cell cycling, differentiation and apoptosis, and uses different modes of RNA stem-loop binding to exert either translational activation or repression. Deubiquitinates activated NOTCH1, promoting its nuclear import, thereby acting as a positive regulator of Notch signaling. This Homo sapiens (Human) protein is Eukaryotic translation initiation factor 3 subunit F.